A 446-amino-acid chain; its full sequence is ATP-dependent protease ATPase subunit HslU (446 aa).

Residues Val-18, 60–65 (GVGKTE), Asp-259, Glu-324, and Arg-396 contribute to the ATP site.

This sequence belongs to the ClpX chaperone family. HslU subfamily. In terms of assembly, a double ring-shaped homohexamer of HslV is capped on each side by a ring-shaped HslU homohexamer. The assembly of the HslU/HslV complex is dependent on binding of ATP.

It is found in the cytoplasm. Functionally, ATPase subunit of a proteasome-like degradation complex; this subunit has chaperone activity. The binding of ATP and its subsequent hydrolysis by HslU are essential for unfolding of protein substrates subsequently hydrolyzed by HslV. HslU recognizes the N-terminal part of its protein substrates and unfolds these before they are guided to HslV for hydrolysis. This Acidovorax sp. (strain JS42) protein is ATP-dependent protease ATPase subunit HslU.